The chain runs to 913 residues: Protein ECT2 (913 aa).

A2 carries the N-acetylalanine modification. BRCT domains are found at residues 176–260 and 266–354; these read MLNL…AAVD and FKVP…MYLY. Residue T359 is modified to Phosphothreonine; by PKC/PRKCI. S367 and S370 each carry phosphoserine. T373 bears the Phosphothreonine mark. S376 is subject to Phosphoserine. Short sequence motifs (nuclear localization signal) lie at residues 378–382 and 401–405; these read RKRRR and PRKRP. Disordered stretches follow at residues 389-415 and 427-450; these read QLSR…SIGS and IHYG…PPKQ. A Phosphothreonine; by CDK1 modification is found at T444. Residues 452-641 form the DH domain; sequence ARWQVAKELY…KEVMTHINED (190 aa). Residue K611 forms a Glycyl lysine isopeptide (Lys-Gly) (interchain with G-Cter in SUMO2) linkage. A PH domain is found at 675 to 794; that stretch reads RVETVSLGEH…KMLCRHVANT (120 aa). Phosphoserine occurs at positions 716 and 842. The residue at position 846 (T846) is a Phosphothreonine; by CDK1. Positions 853-874 are disordered; the sequence is MALSSSHSSEGRSPPSSGKLAV. The span at 856 to 870 shows a compositional bias: low complexity; it reads SSSHSSEGRSPPSSG. Phosphoserine is present on residues S861 and S865.

As to quaternary structure, homodimer. Homooligomer. Found in the centralspindlin complex. Interacts with NR1I3. Interacts (Thr-359 phosphorylated form) with PARD6A; the interaction is observed in cancer cells. Interacts (Thr-359 phosphorylated form) with PRKCI; the interaction is observed in cancer cells. Interacts with PKP4; the interaction is observed at the midbody. Interacts with RACGAP1; the interaction is direct, occurs in a microtubule-dependent manner, occurs at anaphase and during cytokinesis, is inhibited in metaphase by phosphorylation of ECT2 on Thr-373 and is stimulated in early anaphase by dephosphorylation of ECT2 probably on Thr-373 through CDK1 activity. Interacts with PLK1; the interaction is stimulated upon its phosphorylation on Thr-444. Interacts with RHOA; the interaction results in allosteric activation of ECT2. Interacts with KIF23, PARD3, PARD6B and PRKCQ. Interacts with NEDD9/HEF1. Phosphorylated by PLK1 in vitro. Hyperphosphorylated during the G2 phase of the cell cycle. Phosphorylation at Thr-373 occurs during the G2/M phase, relieves its auto-inhibition status and stimulates its GEF activity. Phosphorylation at Thr-444 in G2/M phase is required for subsequent binding with PLK1 and Rho exchange activation. Dephosphorylated at the time of cytokinesis. Phosphorylation at Thr-359 is required for its transformation activity in cancer cells. Highest expression in testis. Also detectable in brain, kidney, liver and spleen.

The protein resides in the nucleus. It is found in the cytoplasm. The protein localises to the cytoskeleton. Its subcellular location is the spindle. It localises to the cleavage furrow. The protein resides in the midbody. It is found in the cell junction. The protein localises to the tight junction. With respect to regulation, autoinhibited by the C-terminal PH domain which folds back and binds to the surface of the DH domain, blocking binding of RHOA to the catalytic center of the DH domain. The 2nd BRCT domain is also involved in inhibition, probably by helping to impede RHOA binding. Allosterically activated by binding of activated GTP-bound RHOA to the PH domain which stimulates the release of PH inhibition and promotes the binding of substrate RHOA to the catalytic center. Binding of phosphorylated RACGAP1 to the N-terminal BRCT domain-containing region also releases autoinhibition. Guanine nucleotide exchange factor (GEF) that catalyzes the exchange of GDP for GTP. Promotes guanine nucleotide exchange on the Rho family members of small GTPases, like RHOA, RHOC, RAC1 and CDC42. Required for signal transduction pathways involved in the regulation of cytokinesis. Component of the centralspindlin complex that serves as a microtubule-dependent and Rho-mediated signaling required for the myosin contractile ring formation during the cell cycle cytokinesis. Regulates the translocation of RHOA from the central spindle to the equatorial region. Plays a role in the control of mitotic spindle assembly; regulates the activation of CDC42 in metaphase for the process of spindle fibers attachment to kinetochores before chromosome congression. Involved in the regulation of epithelial cell polarity; participates in the formation of epithelial tight junctions in a polarity complex PARD3-PARD6-protein kinase PRKCQ-dependent manner. Plays a role in the regulation of neurite outgrowth. Inhibits phenobarbital (PB)-induced NR1I3 nuclear translocation. Stimulates the activity of RAC1 through its association with the oncogenic PARD6A-PRKCI complex in cancer cells, thereby acting to coordinately drive tumor cell proliferation and invasion. Also stimulates genotoxic stress-induced RHOB activity in breast cancer cells leading to their cell death. This Mus musculus (Mouse) protein is Protein ECT2 (Ect2).